The following is a 210-amino-acid chain: DNA-directed RNA polymerases I, II, and III subunit RPABC1 (210 aa).

The residue at position 1 (Met-1) is an N-acetylmethionine. A Glycyl lysine isopeptide (Lys-Gly) (interchain with G-Cter in SUMO2) cross-link involves residue Lys-81.

This sequence belongs to the archaeal Rpo5/eukaryotic RPB5 RNA polymerase subunit family. Component of the RNA polymerase I (Pol I), RNA polymerase II (Pol II) and RNA polymerase III (Pol III) complexes consisting of at least 13, 12 and 17 subunits, respectively. Pol I complex consists of a ten-subunit catalytic core composed of POLR1A/RPA1, POLR1B/RPA2, POLR1C/RPAC1, POLR1D/RPAC2, POLR1H/RPA12, POLR2E/RPABC1, POLR2F/RPABC2, POLR2H/RPABC3, POLR2K/RPABC4 and POLR2L/RPABC5; a mobile stalk subunit POLR1F/RPA43 protruding from the core and additional subunits homologous to general transcription factors POLR1E/RPA49 and POLR1G/RPA34. Part of Pol I pre-initiation complex (PIC), in which Pol I core assembles with RRN3 and promoter-bound UTBF and SL1/TIF-IB complex. Pol II complex contains a ten-subunit catalytic core composed of POLR2A/RPB1, POLR2B/RPB2, POLR2C/RPB3, POLR2I/RPB9, POLR2J/RPB11, POLR2E/RPABC1, POLR2F/RPABC2, POLR2H/RPABC3, POLR2K/RPABC4 and POLR2L/RPABC5 and a mobile stalk composed of two subunits POLR2D/RPB4 and POLR2G/RPB7. Part of Pol II(G) complex, in which Pol II core associates with an additional subunit POLR2M; unlike conventional Pol II, Pol II(G) functions as a transcriptional repressor. Part of TBP-based Pol II pre-initiation complex (PIC), in which Pol II core assembles with general transcription factors and other specific initiation factors including GTF2E1, GTF2E2, GTF2F1, GTF2F2, TCEA1, ERCC2, ERCC3, GTF2H2, GTF2H3, GTF2H4, GTF2H5, GTF2A1, GTF2A2, GTF2B and TBP; this large multi-subunit PIC complex mediates DNA unwinding and targets Pol II core to the transcription start site where the first phosphodiester bond forms. In Pol II complex, this subunit is present in 2-fold molar excess over the other subunits. Pol III complex consists of a ten-subunit catalytic core composed of POLR3A/RPC1, POLR3B/RPC2, POLR1C/RPAC1, POLR1D/RPAC2, POLR3K/RPC10, POLR2E/RPABC1, POLR2F/RPABC2, POLR2H/RPABC3, POLR2K/RPABC4 and POLR2L/RPABC5; a mobile stalk composed of two subunits POLR3H/RPC8 and CRCP/RPC9, protruding from the core and functioning primarily in transcription initiation; and additional subunits homologous to general transcription factors of the RNA polymerase II machinery, POLR3C/RPC3-POLR3F/RPC6-POLR3G/RPC7 heterotrimer required for transcription initiation and POLR3D/RPC4-POLR3E/RPC5 heterodimer involved in both transcription initiation and termination. Component of the PAQosome complex which is responsible for the biogenesis of several protein complexes and which consists of R2TP complex members RUVBL1, RUVBL2, RPAP3 and PIH1D1, URI complex members PFDN2, PFDN6, PDRG1, UXT and URI1 as well as ASDURF, POLR2E and DNAAF10/WDR92. Interacts with URI1. As to quaternary structure, (Microbial infection) Interacts with HBV protein X.

The protein localises to the nucleus. It is found in the nucleolus. In terms of biological role, DNA-dependent RNA polymerase catalyzes the transcription of DNA into RNA using the four ribonucleoside triphosphates as substrates. Common component of RNA polymerases I, II and III which synthesize ribosomal RNA precursors, mRNA precursors and many functional non-coding RNAs, and small RNAs, such as 5S rRNA and tRNAs, respectively. Pol II is the central component of the basal RNA polymerase II transcription machinery. Pols are composed of mobile elements that move relative to each other. In Pol II, POLR2E/RPABC1 is part of the lower jaw surrounding the central large cleft and thought to grab the incoming DNA template. The sequence is that of DNA-directed RNA polymerases I, II, and III subunit RPABC1 from Homo sapiens (Human).